The following is a 376-amino-acid chain: Proteasome-interacting protein CIC1 (376 aa).

2 disordered regions span residues 1–29 (MAKKSNSKKSTPVSTPSKEKKKVIEKKSS) and 356–376 (RSSSELEKESSESEAVKKAKS). The tract at residues 310 to 376 (ETHEDDMVTI…ESEAVKKAKS (67 aa)) is required for interaction with CDC4. Residues 357 to 376 (SSSELEKESSESEAVKKAKS) show a composition bias toward basic and acidic residues.

Interacts with CDC4, PRE4, PRE6, RPT1 and SCL1 as part of the fully assembled 26S proteasome. Interacts with pre-ribosomal particles constituent NOP7.

The protein localises to the nucleus. Its subcellular location is the nucleolus. Its function is as follows. An adapter protein that specifically links the 26S proteasome to its substrate CDC4 which is one of the substrate recognition subunits of the SCF E3 ubiquitin ligase complex. Required for turnover of cell cycle regulatory proteins CDC4 and GRR1. Required for synthesis and nuclear export of 60S ribosomal subunits. Required for vegetative growth. The sequence is that of Proteasome-interacting protein CIC1 (CIC1) from Saccharomyces cerevisiae (strain ATCC 204508 / S288c) (Baker's yeast).